The chain runs to 345 residues: uncharacterized protein (345 aa).

A run of 2 helical transmembrane segments spans residues 23 to 43 (VVGF…YSYV) and 56 to 76 (FLIA…FVAL). Residues 326 to 345 (VTEPTTNSKRKPVKAKKAKK) are disordered. Residues 333 to 345 (SKRKPVKAKKAKK) are compositionally biased toward basic residues.

It localises to the cell membrane. This is an uncharacterized protein from Mycoplasma pneumoniae (strain ATCC 29342 / M129 / Subtype 1) (Mycoplasmoides pneumoniae).